The following is a 294-amino-acid chain: Cell division control protein 2 homolog 2 (294 aa).

The region spanning 4–287 is the Protein kinase domain; the sequence is YEKVEKIGEG…ARGALEHEYF (284 aa). Residues 10-18 and Lys33 contribute to the ATP site; that span reads IGEGTYGVV. A Phosphothreonine modification is found at Thr14. The residue at position 15 (Tyr15) is a Phosphotyrosine. Asp127 acts as the Proton acceptor in catalysis. Residue Thr161 is modified to Phosphothreonine; by CAK.

Belongs to the protein kinase superfamily. CMGC Ser/Thr protein kinase family. CDC2/CDKX subfamily. Found in most organs including root, young leaf, stem, vegetative meristem and flower bud.

It carries out the reaction L-seryl-[protein] + ATP = O-phospho-L-seryl-[protein] + ADP + H(+). The catalysed reaction is L-threonyl-[protein] + ATP = O-phospho-L-threonyl-[protein] + ADP + H(+). Phosphorylation at Thr-14 or Tyr-15 inactivates the enzyme, while phosphorylation at Thr-161 activates it. Functionally, plays a key role in the control of the eukaryotic cell cycle. Component of the kinase complex that phosphorylates the repetitive C-terminus of RNA polymerase II. This is Cell division control protein 2 homolog 2 (CDC2B) from Medicago sativa (Alfalfa).